Reading from the N-terminus, the 139-residue chain is Spermatogenesis-associated protein 33 (139 aa).

The tract at residues 1–67 (MVTHAAGART…TAKHPPPAAS (67 aa)) is interaction with ATG16L1. The tract at residues 1–83 (MVTHAAGART…VKQKSSRKKV (83 aa)) is disordered. Positions 25–50 (KSKEKLMEKHSQEARQADRESEKPVD) are enriched in basic and acidic residues. The segment at 68–139 (LEEKPDVKQK…ADAYNSHLKE (72 aa)) is interaction with VDAC2. The PQIIIT motif lies at 86-91 (PQIIIT). S94 is subject to Phosphoserine. Residues 97 to 109 (TLVSCSSSGSDQQ) are compositionally biased toward polar residues. The segment at 97–139 (TLVSCSSSGSDQQRTIREPEDWGPYRRHRNPSTADAYNSHLKE) is disordered. The span at 110–120 (RTIREPEDWGP) shows a compositional bias: basic and acidic residues.

Interacts (via PQIIIT motif) with PPP3R1, PPP3R2, PPP3CA, PPP3CB and PPP3CC. Interacts with VDAC2. Interacts with ATG16L1 (via WD repeats).

The protein localises to the cytoplasm. It is found in the cytosol. The protein resides in the nucleus. It localises to the mitochondrion. Plays an important role in sperm motility and male fertility. Required for sperm midpiece flexibility and for the localization of sperm calcineurin to the mitochondria. Promotes mitophagy as well as acts as an autophagy mediator in male germline cells. Links damaged mitochondria to autophagosomes via its binding to the outer mitochondrial membrane protein VDAC2, as well as to key autophagy machinery component ATG16L1. The protein is Spermatogenesis-associated protein 33 (SPATA33) of Homo sapiens (Human).